The primary structure comprises 334 residues: MAVASVAAALLAALGGALWLAARRFSGPRNQRQQGGGDPGLMHGKTVLITGANSGLGRATAAELLRLGARVIMGCRDRARAEEAAGQLRQELCQAGGAGPDGTDGQLVVKELDLASLRSVRAFCQELLQEEPRLDVLINNAGVFHCPYTKTEDGFEMQFGVNHLGHFLLTNLLLGLLKSSAPSRIVVVSSKLYKYGEINFEDLNSEQSYNKSFCYSRSKLANILFTRELARRLEGTNVTVNVLHPGIVRTNLGRHIHIPLLARPLFNLVSWAFFKTPLEGAQTSIYLACSPDVEGVSGRYFGDCKEEELLPKAMDESVARKLWDISEVMVGILK.

51-57 (GANSGLG) is an NADP(+) binding site. Ser190 is a binding site for substrate. Tyr215 functions as the Proton acceptor in the catalytic mechanism.

It belongs to the short-chain dehydrogenases/reductases (SDR) family.

The catalysed reaction is all-trans-retinol + NADP(+) = all-trans-retinal + NADPH + H(+). The enzyme catalyses 11-cis-retinol + NADP(+) = 11-cis-retinal + NADPH + H(+). It catalyses the reaction 9-cis-retinol + NADP(+) = 9-cis-retinal + NADPH + H(+). Functionally, retinol dehydrogenase with a clear preference for NADP. Displays high activity towards 9-cis, 11-cis and all-trans-retinol. Shows a very weak activity towards 13-cis-retinol. Has no activity towards steroids. The sequence is that of Retinol dehydrogenase 14 (Rdh14) from Mus musculus (Mouse).